Consider the following 471-residue polypeptide: tRNA-2-methylthio-N(6)-dimethylallyladenosine synthase (471 aa).

The MTTase N-terminal domain occupies 31 to 149 (LYYHIETYGC…FPQLLWEALN (119 aa)). Residues cysteine 40, cysteine 76, cysteine 110, cysteine 186, cysteine 190, and cysteine 193 each contribute to the [4Fe-4S] cluster site. In terms of domain architecture, Radical SAM core spans 172–402 (RDSNLKAWVN…IELQNKISLE (231 aa)). The 64-residue stretch at 405–468 (AELRGKIVEV…AWTMQGELVE (64 aa)) folds into the TRAM domain.

Belongs to the methylthiotransferase family. MiaB subfamily. In terms of assembly, monomer. The cofactor is [4Fe-4S] cluster.

Its subcellular location is the cytoplasm. It catalyses the reaction N(6)-dimethylallyladenosine(37) in tRNA + (sulfur carrier)-SH + AH2 + 2 S-adenosyl-L-methionine = 2-methylsulfanyl-N(6)-dimethylallyladenosine(37) in tRNA + (sulfur carrier)-H + 5'-deoxyadenosine + L-methionine + A + S-adenosyl-L-homocysteine + 2 H(+). In terms of biological role, catalyzes the methylthiolation of N6-(dimethylallyl)adenosine (i(6)A), leading to the formation of 2-methylthio-N6-(dimethylallyl)adenosine (ms(2)i(6)A) at position 37 in tRNAs that read codons beginning with uridine. This is tRNA-2-methylthio-N(6)-dimethylallyladenosine synthase from Thermoanaerobacter sp. (strain X514).